We begin with the raw amino-acid sequence, 418 residues long: RapA guanosine triphosphatase-activating protein B (418 aa).

One can recognise a Rap-GAP domain in the interval 142–407 (LVKVCEPEFN…EKASALINVI (266 aa)). The interval 304–339 (NRVVGEQPSPSLTTTTTTTTTTSPTINSNSPTPSNK) is disordered. The segment covering 311–338 (PSPSLTTTTTTTTTTSPTINSNSPTPSN) has biased composition (low complexity).

Its function is as follows. Mediates the deactivation of rap1 during multicellular development and is required for normal morphogenesis. Also required for the correct patterning of specific subtypes of prestalk cells. In Dictyostelium discoideum (Social amoeba), this protein is RapA guanosine triphosphatase-activating protein B (rapgapB).